Here is a 449-residue protein sequence, read N- to C-terminus: Probable glycine dehydrogenase (decarboxylating) subunit 1 (449 aa).

This sequence belongs to the GcvP family. N-terminal subunit subfamily. As to quaternary structure, the glycine cleavage system is composed of four proteins: P, T, L and H. In this organism, the P 'protein' is a heterodimer of two subunits.

The catalysed reaction is N(6)-[(R)-lipoyl]-L-lysyl-[glycine-cleavage complex H protein] + glycine + H(+) = N(6)-[(R)-S(8)-aminomethyldihydrolipoyl]-L-lysyl-[glycine-cleavage complex H protein] + CO2. The glycine cleavage system catalyzes the degradation of glycine. The P protein binds the alpha-amino group of glycine through its pyridoxal phosphate cofactor; CO(2) is released and the remaining methylamine moiety is then transferred to the lipoamide cofactor of the H protein. The sequence is that of Probable glycine dehydrogenase (decarboxylating) subunit 1 from Solibacter usitatus (strain Ellin6076).